The primary structure comprises 503 residues: Cardiolipin synthase (503 aa).

Transmembrane regions (helical) follow at residues 5 to 25, 30 to 50, and 59 to 79; these read LNVL…RGFL, VGTL…IIFF, and LTWL…YLMF. PLD phosphodiesterase domains lie at 238–265 and 416–443; these read INYR…GDEY and NRGF…DMRS. Residues His243, Lys245, Asp250, His421, Lys423, and Asp428 contribute to the active site.

This sequence belongs to the phospholipase D family. Cardiolipin synthase subfamily.

It localises to the cell membrane. The enzyme catalyses 2 a 1,2-diacyl-sn-glycero-3-phospho-(1'-sn-glycerol) = a cardiolipin + glycerol. Its function is as follows. Catalyzes the reversible phosphatidyl group transfer from one phosphatidylglycerol molecule to another to form cardiolipin (CL) (diphosphatidylglycerol) and glycerol. The polypeptide is Cardiolipin synthase (cls) (Alkalihalophilus pseudofirmus (strain ATCC BAA-2126 / JCM 17055 / OF4) (Bacillus pseudofirmus)).